The following is a 41-amino-acid chain: Photosystem I reaction center subunit IX (41 aa).

Residues 7–27 (YLSSAPILATIWFAITAGILI) traverse the membrane as a helical segment.

This sequence belongs to the PsaJ family.

It localises to the cellular thylakoid membrane. Functionally, may help in the organization of the PsaE and PsaF subunits. In Synechococcus sp. (strain ATCC 27144 / PCC 6301 / SAUG 1402/1) (Anacystis nidulans), this protein is Photosystem I reaction center subunit IX.